A 545-amino-acid polypeptide reads, in one-letter code: GMP synthase [glutamine-hydrolyzing] (545 aa).

Positions 17–211 (TVLVLDMGSQ…ATKICGARPD (195 aa)) constitute a Glutamine amidotransferase type-1 domain. The Nucleophile role is filled by Cys93. Catalysis depends on residues His185 and Glu187. The GMPS ATP-PPase domain maps to 212-420 (WKMDDFSARE…LGIHEELIGR (209 aa)). An ATP-binding site is contributed by 240 to 246 (SGGVDST). Residues Arg313, Asp482, Lys537, and Glu543 each contribute to the XMP site.

Homodimer. Requires Mg(2+) as cofactor.

The protein resides in the cytoplasm. Its subcellular location is the cytosol. The enzyme catalyses XMP + L-glutamine + ATP + H2O = GMP + L-glutamate + AMP + diphosphate + 2 H(+). Its pathway is purine metabolism; GMP biosynthesis; GMP from XMP (L-Gln route): step 1/1. Functionally, catalyzes the conversion of xanthine monophosphate (XMP) to GMP in the presence of glutamine and ATP through an adenyl-XMP intermediate. The polypeptide is GMP synthase [glutamine-hydrolyzing] (GUA1) (Gibberella zeae (strain ATCC MYA-4620 / CBS 123657 / FGSC 9075 / NRRL 31084 / PH-1) (Wheat head blight fungus)).